We begin with the raw amino-acid sequence, 1164 residues long: DNA-directed RNA polymerase 132 kDa polypeptide (1164 aa).

It belongs to the RNA polymerase beta chain family. In terms of assembly, the DNA-dependent RNA polymerase used for intermediate and late genes expression consists of eight subunits (147) kDa, (133) kDa, (35) kDa, (30) kDa, (22) kDa, (19) kDa, (18) kDa and (7) kDa totalling more than 500 kDa in mass. The same holoenzyme, with the addition of the transcription-specificity factor RAP94, is used for early gene expression.

It localises to the virion. The enzyme catalyses RNA(n) + a ribonucleoside 5'-triphosphate = RNA(n+1) + diphosphate. In terms of biological role, part of the DNA-dependent RNA polymerase which catalyzes the transcription of viral DNA into RNA using the four ribonucleoside triphosphates as substrates. Responsible for the transcription of early, intermediate and late genes. DNA-dependent RNA polymerase associates with the early transcription factor (ETF), itself composed of D6 and A7, thereby allowing the early genes transcription. Late transcription, and probably also intermediate transcription, require newly synthesized RNA polymerase. The sequence is that of DNA-directed RNA polymerase 132 kDa polypeptide (RPO132) from Mus musculus (Mouse).